A 136-amino-acid polypeptide reads, in one-letter code: UPF0299 membrane protein PM0880 (136 aa).

4 helical membrane-spanning segments follow: residues 5–25, 29–49, 67–87, and 92–112; these read IVDL…GEWI, LNIG…GLTF, YMAL…DVLF, and VLLL…GLLS.

It belongs to the UPF0299 family.

The protein localises to the cell inner membrane. This is UPF0299 membrane protein PM0880 from Pasteurella multocida (strain Pm70).